The primary structure comprises 395 residues: Elongation factor Tu (395 aa).

The region spanning 10 to 205 is the tr-type G domain; it reads KVHMNVGTIG…TMDEYFKDPV (196 aa). Residues 19-26 are G1; that stretch reads GHVDHGKT. 19 to 26 is a binding site for GTP; the sequence is GHVDHGKT. Position 26 (T26) interacts with Mg(2+). A G2 region spans residues 60-64; that stretch reads GITIN. Residues 81–84 form a G3 region; the sequence is DCPG. Residues 81 to 85 and 136 to 139 contribute to the GTP site; these read DCPGH and NKVD. Positions 136 to 139 are G4; sequence NKVD. The tract at residues 173–175 is G5; the sequence is SAF.

Belongs to the TRAFAC class translation factor GTPase superfamily. Classic translation factor GTPase family. EF-Tu/EF-1A subfamily. In terms of assembly, monomer.

The protein localises to the cytoplasm. It catalyses the reaction GTP + H2O = GDP + phosphate + H(+). GTP hydrolase that promotes the GTP-dependent binding of aminoacyl-tRNA to the A-site of ribosomes during protein biosynthesis. The sequence is that of Elongation factor Tu from Treponema denticola (strain ATCC 35405 / DSM 14222 / CIP 103919 / JCM 8153 / KCTC 15104).